The sequence spans 200 residues: ATP-dependent Clp protease proteolytic subunit (200 aa).

The active-site Nucleophile is serine 103. The active site involves histidine 128.

This sequence belongs to the peptidase S14 family. In terms of assembly, fourteen ClpP subunits assemble into 2 heptameric rings which stack back to back to give a disk-like structure with a central cavity, resembling the structure of eukaryotic proteasomes.

It localises to the cytoplasm. The enzyme catalyses Hydrolysis of proteins to small peptides in the presence of ATP and magnesium. alpha-casein is the usual test substrate. In the absence of ATP, only oligopeptides shorter than five residues are hydrolyzed (such as succinyl-Leu-Tyr-|-NHMec, and Leu-Tyr-Leu-|-Tyr-Trp, in which cleavage of the -Tyr-|-Leu- and -Tyr-|-Trp bonds also occurs).. Its function is as follows. Cleaves peptides in various proteins in a process that requires ATP hydrolysis. Has a chymotrypsin-like activity. Plays a major role in the degradation of misfolded proteins. The protein is ATP-dependent Clp protease proteolytic subunit of Vibrio cholerae serotype O1 (strain ATCC 39541 / Classical Ogawa 395 / O395).